Reading from the N-terminus, the 266-residue chain is Hemin import ATP-binding protein HmuV (266 aa).

Positions Leu12 to Asp248 constitute an ABC transporter domain. Residue Gly44–Ser51 participates in ATP binding.

The protein belongs to the ABC transporter superfamily. Heme (hemin) importer (TC 3.A.1.14.5) family. As to quaternary structure, the complex is composed of two ATP-binding proteins (HmuV), two transmembrane proteins (HmuU) and a solute-binding protein (HmuT).

It is found in the cell inner membrane. In terms of biological role, part of the ABC transporter complex HmuTUV involved in hemin import. Responsible for energy coupling to the transport system. This is Hemin import ATP-binding protein HmuV from Yersinia enterocolitica.